A 560-amino-acid polypeptide reads, in one-letter code: Kinesin light chain 1 (560 aa).

Positions valine 31–valine 99 form a coiled coil. A compositionally biased stretch (basic and acidic residues) spans lysine 155–leucine 176. The disordered stretch occupies residues lysine 155–glutamine 203. Position 162 is a phosphoserine (serine 162). Residues glutamine 192–glutamine 203 are compositionally biased toward low complexity. 5 TPR repeats span residues leucine 213–threonine 246, alanine 255–threonine 288, alanine 297–valine 330, alanine 339–lysine 372, and alanine 381–arginine 414. Position 449 is a phosphotyrosine (tyrosine 449). Serine 460 bears the Phosphoserine mark. The TPR 6 repeat unit spans residues threonine 464 to glycine 497. 2 positions are modified to phosphoserine; by AMPK: serine 521 and serine 524.

Belongs to the kinesin light chain family. In terms of assembly, oligomeric complex composed of two heavy chains and two light chains. Interacts with SPAG9. Interacts with ATCAY; may link mitochondria to KLC1 and regulate mitochondria localization into neuron projections. Interacts (via TPR repeats) with TOR1A; the interaction associates TOR1A with the kinesin oligomeric complex. Interacts with BORCS5. Interacts with MAPK8IP3/JIP3 and NTRK2/TRKB; interaction with NTRK2/TRKB is mediated by MAPK8IP3/JIP3. Interacts with CLSTN1; phosphorylation at Ser-460 inhibits interaction with CLSTN1. Phosphorylation at Ser-460 by ERK inhibits interaction with CLSTN1 and localization to cytoplasmic vesicles.

The protein resides in the cell projection. It localises to the growth cone. Its subcellular location is the cytoplasmic vesicle. The protein localises to the cytoplasm. It is found in the cytoskeleton. Its function is as follows. Kinesin is a microtubule-associated force-producing protein that may play a role in organelle transport. The light chain may function in coupling of cargo to the heavy chain or in the modulation of its ATPase activity. In Pongo abelii (Sumatran orangutan), this protein is Kinesin light chain 1 (KLC1).